The following is a 502-amino-acid chain: Glutamate--tRNA ligase (502 aa).

Positions 12–22 (PSPTGYLHVGG) match the 'HIGH' region motif. Positions 259-263 (KLSKR) match the 'KMSKS' region motif. Lys262 contacts ATP.

Belongs to the class-I aminoacyl-tRNA synthetase family. Glutamate--tRNA ligase type 1 subfamily. In terms of assembly, monomer.

Its subcellular location is the cytoplasm. The catalysed reaction is tRNA(Glu) + L-glutamate + ATP = L-glutamyl-tRNA(Glu) + AMP + diphosphate. Its function is as follows. Catalyzes the attachment of glutamate to tRNA(Glu) in a two-step reaction: glutamate is first activated by ATP to form Glu-AMP and then transferred to the acceptor end of tRNA(Glu). This chain is Glutamate--tRNA ligase, found in Chlorobium chlorochromatii (strain CaD3).